The primary structure comprises 213 residues: NADH-quinone oxidoreductase subunit C (213 aa).

The protein belongs to the complex I 30 kDa subunit family. NDH-1 is composed of 14 different subunits. Subunits NuoB, C, D, E, F, and G constitute the peripheral sector of the complex.

Its subcellular location is the cell inner membrane. It carries out the reaction a quinone + NADH + 5 H(+)(in) = a quinol + NAD(+) + 4 H(+)(out). NDH-1 shuttles electrons from NADH, via FMN and iron-sulfur (Fe-S) centers, to quinones in the respiratory chain. The immediate electron acceptor for the enzyme in this species is believed to be ubiquinone. Couples the redox reaction to proton translocation (for every two electrons transferred, four hydrogen ions are translocated across the cytoplasmic membrane), and thus conserves the redox energy in a proton gradient. This chain is NADH-quinone oxidoreductase subunit C, found in Rhodospirillum rubrum (strain ATCC 11170 / ATH 1.1.1 / DSM 467 / LMG 4362 / NCIMB 8255 / S1).